Consider the following 216-residue polypeptide: Ribose-5-phosphate isomerase A (216 aa).

Residues 26-29, 79-82, and 92-95 contribute to the substrate site; these read TGST, DGAD, and KGGG. Catalysis depends on glutamate 101, which acts as the Proton acceptor. Residue lysine 119 coordinates substrate.

The protein belongs to the ribose 5-phosphate isomerase family. In terms of assembly, homodimer.

It catalyses the reaction aldehydo-D-ribose 5-phosphate = D-ribulose 5-phosphate. Its pathway is carbohydrate degradation; pentose phosphate pathway; D-ribose 5-phosphate from D-ribulose 5-phosphate (non-oxidative stage): step 1/1. In terms of biological role, catalyzes the reversible conversion of ribose-5-phosphate to ribulose 5-phosphate. The polypeptide is Ribose-5-phosphate isomerase A (Legionella pneumophila (strain Lens)).